Here is an 842-residue protein sequence, read N- to C-terminus: Glucans biosynthesis glucosyltransferase H (842 aa).

The next 7 membrane-spanning stretches (helical) occupy residues 140-160, 194-214, 513-533, 570-590, 615-635, 656-676, and 680-700; these read ILLL…KTIL, ILIL…TALM, VFLT…FLAL, LFAS…MLIW, VLLA…AFLG, FMRH…MAWL, and FLFW…VSVV.

The protein belongs to the glycosyltransferase 2 family. OpgH subfamily.

It localises to the cell inner membrane. It participates in glycan metabolism; osmoregulated periplasmic glucan (OPG) biosynthesis. Its function is as follows. Involved in the biosynthesis of osmoregulated periplasmic glucans (OPGs). In Citrobacter koseri (strain ATCC BAA-895 / CDC 4225-83 / SGSC4696), this protein is Glucans biosynthesis glucosyltransferase H.